The following is a 101-amino-acid chain: Urease subunit beta (101 aa).

This sequence belongs to the urease beta subunit family. As to quaternary structure, heterotrimer of UreA (gamma), UreB (beta) and UreC (alpha) subunits. Three heterotrimers associate to form the active enzyme.

The protein resides in the cytoplasm. The enzyme catalyses urea + 2 H2O + H(+) = hydrogencarbonate + 2 NH4(+). Its pathway is nitrogen metabolism; urea degradation; CO(2) and NH(3) from urea (urease route): step 1/1. In Ruegeria sp. (strain TM1040) (Silicibacter sp.), this protein is Urease subunit beta.